The primary structure comprises 95 residues: MNLKPLNDRVLVKRLESEEKTAGGLYIPDTAKEKPSRGEVVAAGPGKTADDGKLVAMTVKAGDMVLFNKYAGTEIKIDGVEHLVMREDDILAIIE.

The protein belongs to the GroES chaperonin family. Heptamer of 7 subunits arranged in a ring. Interacts with the chaperonin GroEL.

The protein resides in the cytoplasm. In terms of biological role, together with the chaperonin GroEL, plays an essential role in assisting protein folding. The GroEL-GroES system forms a nano-cage that allows encapsulation of the non-native substrate proteins and provides a physical environment optimized to promote and accelerate protein folding. GroES binds to the apical surface of the GroEL ring, thereby capping the opening of the GroEL channel. This chain is Co-chaperonin GroES, found in Nitratidesulfovibrio vulgaris (strain ATCC 29579 / DSM 644 / CCUG 34227 / NCIMB 8303 / VKM B-1760 / Hildenborough) (Desulfovibrio vulgaris).